The following is a 352-amino-acid chain: Histidinol-phosphate aminotransferase (352 aa).

Lys216 carries the N6-(pyridoxal phosphate)lysine modification.

This sequence belongs to the class-II pyridoxal-phosphate-dependent aminotransferase family. Histidinol-phosphate aminotransferase subfamily. It depends on pyridoxal 5'-phosphate as a cofactor.

It carries out the reaction L-histidinol phosphate + 2-oxoglutarate = 3-(imidazol-4-yl)-2-oxopropyl phosphate + L-glutamate. It functions in the pathway amino-acid biosynthesis; L-histidine biosynthesis; L-histidine from 5-phospho-alpha-D-ribose 1-diphosphate: step 7/9. This chain is Histidinol-phosphate aminotransferase, found in Methanoculleus marisnigri (strain ATCC 35101 / DSM 1498 / JR1).